Consider the following 156-residue polypeptide: Small ribosomal subunit protein uS7 (156 aa).

It belongs to the universal ribosomal protein uS7 family. In terms of assembly, part of the 30S ribosomal subunit. Contacts proteins S9 and S11.

Functionally, one of the primary rRNA binding proteins, it binds directly to 16S rRNA where it nucleates assembly of the head domain of the 30S subunit. Is located at the subunit interface close to the decoding center, probably blocks exit of the E-site tRNA. The chain is Small ribosomal subunit protein uS7 from Allorhizobium ampelinum (strain ATCC BAA-846 / DSM 112012 / S4) (Agrobacterium vitis (strain S4)).